The chain runs to 338 residues: MDVFNVQELSFSLVRDQPYLSAFLLVMGSIGVGRVIYQTLSVFLQTFILPGTNLRKFGAKKGAWAVVTGATDGIGREFSLQLAKAGFHVFLVARNEALLASTAAEIEQKYGVSTATHSIDFSKADKSAYNSLGSSLGSVDVGVLVNNVGKSHAMPAYFVDTPEEEMSDIVSINVQATLQVTHSVLPGMVQRKRGLILNVGSFAGAVPSPMLATYSGTKAFLTTFSSALGEEVRKDNITVEHLNTYFVVSKLSKIRKASALIPKPDAYVRSVLSKIGLPCGASYSGRPNTSTPFWSHALLDYGLTLIGLQSAFISYTHGLHKDIRRRALRKMERDAKLQ.

The helical transmembrane segment at 20–40 (LSAFLLVMGSIGVGRVIYQTL) threads the bilayer. 8 residues coordinate NADP(+): Val-66, Asn-95, Asp-120, Asn-147, Tyr-214, Lys-218, Val-247, and Ser-249. Tyr-214 serves as the catalytic Proton donor. The Lowers pKa of active site Tyr role is filled by Lys-218.

It belongs to the short-chain dehydrogenases/reductases (SDR) family.

The protein resides in the endoplasmic reticulum membrane. It carries out the reaction a very-long-chain (3R)-3-hydroxyacyl-CoA + NADP(+) = a very-long-chain 3-oxoacyl-CoA + NADPH + H(+). Its pathway is lipid metabolism; fatty acid biosynthesis. Its function is as follows. Component of the microsomal membrane bound fatty acid elongation system, which produces the 26-carbon very long-chain fatty acids (VLCFA) from palmitate. Catalyzes the reduction of the 3-ketoacyl-CoA intermediate that is formed in each cycle of fatty acid elongation. VLCFAs serve as precursors for ceramide and sphingolipids. This is Very-long-chain 3-oxoacyl-CoA reductase from Laccaria bicolor (strain S238N-H82 / ATCC MYA-4686) (Bicoloured deceiver).